A 128-amino-acid chain; its full sequence is Small ribosomal subunit protein uS11m (128 aa).

The protein belongs to the universal ribosomal protein uS11 family.

Its subcellular location is the mitochondrion. This Prototheca wickerhamii protein is Small ribosomal subunit protein uS11m (RPS11).